Here is a 310-residue protein sequence, read N- to C-terminus: Olfactory receptor 2A14 (310 aa).

Over 1 to 24 (MEGNKTWITDITLPRFQVGPALEI) the chain is Extracellular. Residue Asn4 is glycosylated (N-linked (GlcNAc...) asparagine). A helical transmembrane segment spans residues 25-48 (LLCGLFSAFYTLTLLGNGVIFGII). Residues 49–56 (CLDCKLHT) lie on the Cytoplasmic side of the membrane. The chain crosses the membrane as a helical span at residues 57–78 (PMYFFLSHLAIVDISYASNYVP). Residues 79 to 99 (KMLTNLMNQESTISFFPCIMQ) lie on the Extracellular side of the membrane. Cys96 and Cys188 are joined by a disulfide. The helical transmembrane segment at 100-119 (TFLYLAFAHVECLILVVMSY) threads the bilayer. The Cytoplasmic segment spans residues 120–138 (DRYADICHPLRYNSLMSWR). Residues 139-157 (VCTVLAVASWVFSFLLALV) form a helical membrane-spanning segment. Over 158 to 194 (PLVLILSLPFCGPHEINHFFCEILSVLKLACADTWLN) the chain is Extracellular. A helical transmembrane segment spans residues 195 to 218 (QVVIFAACVFILVGPLCLVLVSYL). At 219-235 (RILAAILRIQSGEGRRK) the chain is on the cytoplasmic side. The chain crosses the membrane as a helical span at residues 236-258 (AFSTCSSHLCVVGLFFGSAIVTY). The Extracellular segment spans residues 259–271 (MAPKSRHPEEQQK). Residues 272–291 (VLSLFYSLFNPMLNPLIYSL) form a helical membrane-spanning segment. Over 292–310 (RNAEVKGALRRALRKERLT) the chain is Cytoplasmic.

Belongs to the G-protein coupled receptor 1 family.

Its subcellular location is the cell membrane. Its function is as follows. Odorant receptor. The polypeptide is Olfactory receptor 2A14 (OR2A14) (Homo sapiens (Human)).